A 334-amino-acid chain; its full sequence is N-acetyl-gamma-glutamyl-phosphate reductase (334 aa).

C154 is a catalytic residue.

This sequence belongs to the NAGSA dehydrogenase family. Type 1 subfamily.

The protein resides in the cytoplasm. The catalysed reaction is N-acetyl-L-glutamate 5-semialdehyde + phosphate + NADP(+) = N-acetyl-L-glutamyl 5-phosphate + NADPH + H(+). It functions in the pathway amino-acid biosynthesis; L-arginine biosynthesis; N(2)-acetyl-L-ornithine from L-glutamate: step 3/4. Functionally, catalyzes the NADPH-dependent reduction of N-acetyl-5-glutamyl phosphate to yield N-acetyl-L-glutamate 5-semialdehyde. In Buchnera aphidicola subsp. Acyrthosiphon pisum (strain 5A), this protein is N-acetyl-gamma-glutamyl-phosphate reductase.